The chain runs to 171 residues: Endoribonuclease YbeY (171 aa).

Zn(2+)-binding residues include His126, His130, and His136.

Belongs to the endoribonuclease YbeY family. The cofactor is Zn(2+).

The protein localises to the cytoplasm. Its function is as follows. Single strand-specific metallo-endoribonuclease involved in late-stage 70S ribosome quality control and in maturation of the 3' terminus of the 16S rRNA. The sequence is that of Endoribonuclease YbeY from Rhizobium leguminosarum bv. trifolii (strain WSM2304).